Consider the following 374-residue polypeptide: Nucleosome assembly protein 1;3 (374 aa).

A coiled-coil region spans residues 26-80; that stretch reads VNALKNKLQNLAGQHSDVLENLTPKIRRRVEVLREIQGKHDEIETKFREERAALE. Residue serine 41 is modified to Phosphoserine. The Nuclear export signal signature appears at 47–62; it reads LTPKIRRRVEVLREIQ. The short motif at 222-227 is the Nuclear localization signal element; the sequence is KKKPKK. Over residues 299–339 the composition is skewed to acidic residues; it reads IEGEEFEIDNDDEDDIDEDEDEDEEDEDEDEEEDDEDEEEE. Positions 299 to 374 are disordered; it reads IEGEEFEIDN…GERPPECKQQ (76 aa). The span at 343-355 shows a compositional bias: basic residues; that stretch reads TKKKPSVLHKKGG. Residues 364 to 374 are compositionally biased toward basic and acidic residues; the sequence is QGERPPECKQQ. The residue at position 371 (cysteine 371) is a Cysteine methyl ester. The S-farnesyl cysteine moiety is linked to residue cysteine 371. A propeptide spans 372 to 374 (removed in mature form); the sequence is KQQ.

It belongs to the nucleosome assembly protein (NAP) family. In terms of assembly, can form homomeric and heteromeric protein complexes with NAP1;1, NAP1;2 and NAP1;4. Binds histone H2A and associates with chromatin in vivo. In terms of tissue distribution, ubiquitous.

The protein resides in the nucleus. Its subcellular location is the cytoplasm. In terms of biological role, may modulate chromatin structure by regulation of nucleosome assembly/disassembly. May function in nucleotide excision repair (NER). Involved in somatic homologous recombination. Could be involved in response to abscisic acid (ABA) and to salt stress. In Arabidopsis thaliana (Mouse-ear cress), this protein is Nucleosome assembly protein 1;3 (NAP1;3).